The following is a 529-amino-acid chain: Keratin, type II cytoskeletal 74 (529 aa).

The head stretch occupies residues 1-139 (MSRQLNIKSS…DPEIQKVRAQ (139 aa)). The segment at 140–175 (EREQIKVLNDKFASFIDKVRFLEQQNQVLETKWELL) is coil 1A. The IF rod domain occupies 140–453 (EREQIKVLND…KLLEGEECRM (314 aa)). The segment at 176 to 194 (QQLDLNNCKKNLEPILEGY) is linker 1. Residues 195 to 286 (ISNLRKQLET…CLYDAEIAQI (92 aa)) form a coil 1B region. A linker 12 region spans residues 287-310 (QTHASETSVILSMDNNRDLDLDSI). Residues 311-449 (IAEVRMHYEE…ATYRKLLEGE (139 aa)) form a coil 2 region. Residues 450–529 (ECRMSGENPS…ASIPARKATR (80 aa)) are tail. The segment covering 484–500 (GASAVAGSSGSTQSGQT) has biased composition (low complexity). The interval 484-529 (GASAVAGSSGSTQSGQTKTTEARGGDLKDTQGKSTPASIPARKATR) is disordered. A compositionally biased stretch (basic and acidic residues) spans 503–514 (TEARGGDLKDTQ). Thr-513 is subject to Phosphothreonine.

It belongs to the intermediate filament family. In terms of assembly, heterotetramer of two type I and two type II keratins. As to expression, highly expressed in hair follicles from scalp. In hair, it is specifically present in the inner root sheath (IRS) of the hair follicle. Present in the IRS Huxley layer, but not in Henle layer or cuticle of the IRS. In the IRS Huxley layer, it is expressed in specialized Huxley cells, termed 'Fluegelzellen, along the area of differentiated Henle cells (at protein level).

Functionally, has a role in hair formation. Specific component of keratin intermediate filaments in the inner root sheath (IRS) of the hair follicle. This is Keratin, type II cytoskeletal 74 (KRT74) from Homo sapiens (Human).